We begin with the raw amino-acid sequence, 382 residues long: Serine/threonine-protein kinase US3 homolog (382 aa).

The span at 1-10 shows a compositional bias: basic and acidic residues; that stretch reads MENKQCDHLT. The tract at residues 1-75 is disordered; it reads MENKQCDHLT…ASESDEDDDD (75 aa). Residues 12–24 show a composition bias toward polar residues; it reads WFSTTSDASESMD. Acidic residues predominate over residues 45–75; sequence ADEDLYSDISEGDLEYSDCDSASESDEDDDD. The 287-residue stretch at 93-379 folds into the Protein kinase domain; the sequence is YTVIKTLTPG…AEELLSYPMF (287 aa). ATP-binding positions include 99–107 and Lys122; that span reads LTPGSEGRV. Residue Asp207 is the Proton acceptor of the active site.

The protein belongs to the protein kinase superfamily. Ser/Thr protein kinase family. Post-translationally, phosphorylated by protein 49; this phosphorylation regulates subsequent phosphorylation of proteins 26 and 29 by US3 homolog. Autophosphorylated.

It localises to the host cytoplasm. The protein resides in the host nucleus. It catalyses the reaction L-seryl-[protein] + ATP = O-phospho-L-seryl-[protein] + ADP + H(+). The catalysed reaction is L-threonyl-[protein] + ATP = O-phospho-L-threonyl-[protein] + ADP + H(+). Multifunctional serine/threonine kinase that plays a role in several processes including egress of virus particles from the nucleus, modulation of the actin cytoskeleton and inhibition of apoptosis. Phosphorylates protein 26 and 29, two critical regulators of capsid budding from nucleus to endoplasmic reticulum, thereby facilitating virion egress. Modulates and redistributes host components of the nuclear envelope, including LMNA, emerin/EMD and the nuclear matrix protein MATR3. Phosphorylates envelope glycoprotein B (gB), probably to direct it to the cell surface. Promotes virus intracellular spread by restructuring host cell cytoskeleton. Blocks host apoptosis to extend cell survival and allow efficient viral replication. Promotes viral gene expression by phosphorylating host HDAC2 to reduce viral genome silencing. This chain is Serine/threonine-protein kinase US3 homolog, found in Equine herpesvirus 1 (strain Ab4p) (EHV-1).